Here is a 386-residue protein sequence, read N- to C-terminus: ADP,ATP carrier protein, mitochondrial (386 aa).

The transit peptide at Ala-1–Ala-76 directs the protein to the mitochondrion. 3 Solcar repeats span residues Ala-83–Leu-176, Lys-188–Val-281, and Asp-289–Ile-375. A run of 5 helical transmembrane segments spans residues Phe-85 to Leu-112, Thr-153 to Phe-177, Tyr-186 to Leu-206, Phe-257 to Leu-278, and Phe-292 to Ile-312. 2 residues coordinate ADP: Arg-158 and Lys-170. An ADP-binding site is contributed by Arg-316. Positions Arg-316–Met-321 are important for transport activity. The Nucleotide carrier signature motif motif lies at Arg-316 to Met-321. A helical membrane pass occupies residues Ala-352–Leu-372.

This sequence belongs to the mitochondrial carrier (TC 2.A.29) family. In terms of assembly, monomer.

It localises to the mitochondrion inner membrane. It catalyses the reaction ADP(in) + ATP(out) = ADP(out) + ATP(in). Its activity is regulated as follows. The matrix-open state (m-state) is inhibited by the membrane-permeable bongkrekic acid (BKA). The cytoplasmic-open state (c-state) is inhibited by the membrane-impermeable toxic inhibitor carboxyatractyloside (CATR). Its function is as follows. ADP:ATP antiporter that mediates import of ADP into the mitochondrial matrix for ATP synthesis, and export of ATP out to fuel the cell. Cycles between the cytoplasmic-open state (c-state) and the matrix-open state (m-state): operates by the alternating access mechanism with a single substrate-binding site intermittently exposed to either the cytosolic (c-state) or matrix (m-state) side of the inner mitochondrial membrane. This is ADP,ATP carrier protein, mitochondrial (ANT1) from Solanum tuberosum (Potato).